A 383-amino-acid polypeptide reads, in one-letter code: Neuropeptide Y receptor type 1 (383 aa).

The Extracellular segment spans residues 1-34; the sequence is MNSTSFSQLENHSVHYNLSEEKPSFFAFENDDCH. N-linked (GlcNAc...) asparagine glycans are attached at residues asparagine 2, asparagine 11, and asparagine 17. Residues 35–55 form a helical membrane-spanning segment; it reads LPLAVIFTLALAYGAVIILGV. The Cytoplasmic portion of the chain corresponds to 56–87; sequence SGNLALILIILKQKEMRNVTNILIVNLSFSDL. The helical transmembrane segment at 88-108 threads the bilayer; it reads LVAIMCLPFTFVYTLMDHWIF. Residues 109 to 116 are Extracellular-facing; the sequence is GEIMCKLN. Cysteine 113 and cysteine 198 are joined by a disulfide. Residues 117–137 traverse the membrane as a helical segment; sequence PFVQCVSITVSIFSLVLIAVE. Residues 138-154 lie on the Cytoplasmic side of the membrane; that stretch reads RHQLIINPRGWRPNNRH. The helical transmembrane segment at 155 to 175 threads the bilayer; it reads AYIGIAVIWVLAVASSLPFMI. The Extracellular portion of the chain corresponds to 176–211; that stretch reads YQVLTDEPFQNVTLDAFKDKLVCFDQFPSDSHRLSY. Residues 212-232 traverse the membrane as a helical segment; it reads TTLLLVLQYFGPLCFIFICYF. At 233–260 the chain is on the cytoplasmic side; it reads KIYIRLKRRNNMMDKMRDSKYRSSESKR. Residues 261 to 281 traverse the membrane as a helical segment; it reads INIMLLSIVVAFAVCWLPLTI. Topologically, residues 282–299 are extracellular; that stretch reads FNTVFDWNHQIIATCNHN. The helical transmembrane segment at 300 to 320 threads the bilayer; the sequence is LLFLLCHLTAMISTCVNPIFY. The Cytoplasmic segment spans residues 321 to 383; it reads GFLNKNFQRD…KISCVENEKI (63 aa). Residue cysteine 338 is the site of S-palmitoyl cysteine attachment. Residues serine 368 and serine 376 each carry the phosphoserine modification.

Belongs to the G-protein coupled receptor 1 family.

The protein resides in the cell membrane. In terms of biological role, receptor for neuropeptide Y and peptide YY. The sequence is that of Neuropeptide Y receptor type 1 (NPY1R) from Cavia porcellus (Guinea pig).